The chain runs to 335 residues: Nucleoid-associated protein KPN78578_25800 (335 aa).

Belongs to the YejK family.

It localises to the cytoplasm. The protein localises to the nucleoid. This is Nucleoid-associated protein KPN78578_25800 from Klebsiella pneumoniae subsp. pneumoniae (strain ATCC 700721 / MGH 78578).